Here is a 450-residue protein sequence, read N- to C-terminus: VGFKAGVKEYKLTYYTPDYETKDTDILAAFRVTPQPGVPPEEAGAAVAAESSTGTWTTVWTDGLTSLDRYKGRCYHIEPVAGEENQFIAYVAYPLDLFEEGSVTNMFTSIVGNVFGFKALRALRLEDLRIPVAYVKTFQGPPHGIQVERDKLNKYGRPLLGCTIKPKLGLSAKNYGRAVYECLRGGLDFTKDDENVNSQPFMRWRDRFLFCAEAIYKSQAETGEIKGHYLNATAGTCEEMMKRAVFARELGVPIVMHDYLTGGFTANTSLAHYCRDNGLLLHIHRAMHAVIDRQKNHGIHFRVLAKALRMSGGDHIHSGTVVGKLEGERDITLGFVDLLRDDFIEKDRSRGIYFTQDWVSLPGVLPVASGGIHVWHMPALTEIFGDDSVLQFGGGTLGHPWGNAPGAVANRVALEACVQARNEGRDLAREGNEIIREACKWSPELAAACE.

Lys4 carries the post-translational modification N6,N6,N6-trimethyllysine. Substrate is bound by residues Asn113 and Thr163. Lys165 (proton acceptor) is an active-site residue. Lys167 provides a ligand contact to substrate. Mg(2+) contacts are provided by Lys191, Asp193, and Glu194. Lys191 bears the N6-carboxylysine mark. The Proton acceptor role is filled by His284. The substrate site is built by Arg285, His317, and Ser369.

It belongs to the RuBisCO large chain family. Type I subfamily. As to quaternary structure, heterohexadecamer of 8 large chains and 8 small chains; disulfide-linked. The disulfide link is formed within the large subunit homodimers. Requires Mg(2+) as cofactor. The disulfide bond which can form in the large chain dimeric partners within the hexadecamer appears to be associated with oxidative stress and protein turnover.

Its subcellular location is the plastid. It is found in the chloroplast. It catalyses the reaction 2 (2R)-3-phosphoglycerate + 2 H(+) = D-ribulose 1,5-bisphosphate + CO2 + H2O. The enzyme catalyses D-ribulose 1,5-bisphosphate + O2 = 2-phosphoglycolate + (2R)-3-phosphoglycerate + 2 H(+). RuBisCO catalyzes two reactions: the carboxylation of D-ribulose 1,5-bisphosphate, the primary event in carbon dioxide fixation, as well as the oxidative fragmentation of the pentose substrate in the photorespiration process. Both reactions occur simultaneously and in competition at the same active site. This is Ribulose bisphosphate carboxylase large chain from Sedum rubrotinctum (Jelly bean plant).